Consider the following 431-residue polypeptide: Serine--tRNA ligase (431 aa).

The segment at 41–66 (QSRTQELQAERNARSKSIGEAARRGE) is disordered. 240–242 (TSE) contributes to the L-serine binding site. 271–273 (RSE) lines the ATP pocket. Position 294 (Glu-294) interacts with L-serine. 358–361 (EISS) is an ATP binding site. An L-serine-binding site is contributed by Ser-392.

This sequence belongs to the class-II aminoacyl-tRNA synthetase family. Type-1 seryl-tRNA synthetase subfamily. In terms of assembly, homodimer. The tRNA molecule binds across the dimer.

Its subcellular location is the cytoplasm. The catalysed reaction is tRNA(Ser) + L-serine + ATP = L-seryl-tRNA(Ser) + AMP + diphosphate + H(+). It carries out the reaction tRNA(Sec) + L-serine + ATP = L-seryl-tRNA(Sec) + AMP + diphosphate + H(+). It participates in aminoacyl-tRNA biosynthesis; selenocysteinyl-tRNA(Sec) biosynthesis; L-seryl-tRNA(Sec) from L-serine and tRNA(Sec): step 1/1. Functionally, catalyzes the attachment of serine to tRNA(Ser). Is also able to aminoacylate tRNA(Sec) with serine, to form the misacylated tRNA L-seryl-tRNA(Sec), which will be further converted into selenocysteinyl-tRNA(Sec). This is Serine--tRNA ligase from Aeromonas hydrophila subsp. hydrophila (strain ATCC 7966 / DSM 30187 / BCRC 13018 / CCUG 14551 / JCM 1027 / KCTC 2358 / NCIMB 9240 / NCTC 8049).